The sequence spans 270 residues: dTDP-6-deoxy-L-talose 4-dehydrogenase (NAD(+)) (270 aa).

NAD(+) contacts are provided by residues 11-12 (YI), 50-51 (DI), 72-76 (LAWQA), asparagine 87, threonine 112, tyrosine 135, and lysine 139. Positions 112 and 135 each coordinate substrate. The active-site Proton acceptor is the tyrosine 135.

Belongs to the NAD(P)-dependent epimerase/dehydratase family.

The catalysed reaction is dTDP-6-deoxy-beta-L-talose + NAD(+) = dTDP-4-dehydro-beta-L-rhamnose + NADH + H(+). It functions in the pathway bacterial outer membrane biogenesis; LPS O-antigen biosynthesis. Catalyzes the reduction of dTDP-6-deoxy-L-lyxo-4-hexulose to dTDP-6-deoxy-L-talose. This is dTDP-6-deoxy-L-talose 4-dehydrogenase (NAD(+)) (tll) from Aggregatibacter actinomycetemcomitans (Actinobacillus actinomycetemcomitans).